We begin with the raw amino-acid sequence, 93 residues long: NADH-ubiquinone oxidoreductase chain 4L (93 aa).

The next 3 helical transmembrane spans lie at 3-23 (LTIL…GPLG), 27-47 (IIKL…LIIL), and 55-75 (ILGL…SAIG).

It belongs to the complex I subunit 4L family.

The protein localises to the mitochondrion membrane. It carries out the reaction a ubiquinone + NADH + 5 H(+)(in) = a ubiquinol + NAD(+) + 4 H(+)(out). Its function is as follows. Core subunit of the mitochondrial membrane respiratory chain NADH dehydrogenase (Complex I) that is believed to belong to the minimal assembly required for catalysis. Complex I functions in the transfer of electrons from NADH to the respiratory chain. The immediate electron acceptor for the enzyme is believed to be ubiquinone. This is NADH-ubiquinone oxidoreductase chain 4L (ND4L) from Wickerhamomyces canadensis (Yeast).